The following is an 892-amino-acid chain: Protein FAM193B (892 aa).

4 disordered regions span residues 1–78 (MTRR…TSSQ), 164–192 (SCGG…NSGD), 237–321 (EHHQ…PLLK), and 379–403 (DEGL…THPR). Residues 28-37 (APEPQPPPPS) are compositionally biased toward pro residues. A compositionally biased stretch (basic and acidic residues) spans 56–65 (DGPREEEEPK). Positions 169–185 (SHSSSSSSSSSSSSSSS) are enriched in low complexity. Pro residues-rich tracts occupy residues 248–258 (PNSPTGPPPHP), 274–285 (YPPPLPTTPVAP), and 309–321 (SPHP…PLLK). The segment covering 379–388 (DEGLGEEEDS) has biased composition (acidic residues). The segment covering 391–400 (ERSSCTSSST) has biased composition (low complexity). Positions 485 to 517 (NSARAAKRARHKLKKKEKEKARLATEALKQVNR) form a coiled coil. Composition is skewed to polar residues over residues 587 to 597 (LTPSDLSGSSQ) and 610 to 621 (TLGSPQSHTLQA). 2 disordered regions span residues 587-655 (LTPS…ENGL) and 671-837 (VKTP…SLDD). Pro residues predominate over residues 637–650 (PPPWTEVRGPPPGI). A compositionally biased stretch (low complexity) spans 736-757 (KSQVSSPKQPSKGSEPAKVGSG). 3 positions are modified to phosphoserine: Ser764, Ser776, and Ser882.

The protein belongs to the FAM193 family.

The protein resides in the cytoplasm. The protein localises to the nucleus. The sequence is that of Protein FAM193B (Fam193b) from Mus musculus (Mouse).